The primary structure comprises 339 residues: Ribosomal RNA small subunit methyltransferase C (339 aa).

This sequence belongs to the methyltransferase superfamily. RsmC family. In terms of assembly, monomer.

It is found in the cytoplasm. It catalyses the reaction guanosine(1207) in 16S rRNA + S-adenosyl-L-methionine = N(2)-methylguanosine(1207) in 16S rRNA + S-adenosyl-L-homocysteine + H(+). In terms of biological role, specifically methylates the guanine in position 1207 of 16S rRNA in the 30S particle. This is Ribosomal RNA small subunit methyltransferase C from Aliivibrio fischeri (strain ATCC 700601 / ES114) (Vibrio fischeri).